The primary structure comprises 635 residues: Chaperone protein HtpG (635 aa).

An a; substrate-binding region spans residues 1 to 346; it reads MSQTTTNSAS…SADLPLNVSR (346 aa). The interval 347–563 is b; the sequence is EILQESRDVR…QNELSPHLLR (217 aa). The tract at residues 564–635 is c; that stretch reads MLKAAGQEAP…KRLNGLLLKA (72 aa).

This sequence belongs to the heat shock protein 90 family. As to quaternary structure, homodimer.

The protein resides in the cytoplasm. Molecular chaperone. Has ATPase activity. In Bordetella parapertussis (strain 12822 / ATCC BAA-587 / NCTC 13253), this protein is Chaperone protein HtpG.